A 66-amino-acid polypeptide reads, in one-letter code: Sec-independent protein translocase protein TatA (66 aa).

Residues 1–21 (MIGGLGMPELIIILVIILIIF) form a helical membrane-spanning segment. The tract at residues 45-66 (RDAELNEGDKDDKEKEQEKLDK) is disordered.

This sequence belongs to the TatA/E family. In terms of assembly, the Tat system comprises two distinct complexes: a TatABC complex, containing multiple copies of TatA, TatB and TatC subunits, and a separate TatA complex, containing only TatA subunits. Substrates initially bind to the TatABC complex, which probably triggers association of the separate TatA complex to form the active translocon.

The protein resides in the cell inner membrane. Functionally, part of the twin-arginine translocation (Tat) system that transports large folded proteins containing a characteristic twin-arginine motif in their signal peptide across membranes. TatA could form the protein-conducting channel of the Tat system. This is Sec-independent protein translocase protein TatA from Desulforapulum autotrophicum (strain ATCC 43914 / DSM 3382 / VKM B-1955 / HRM2) (Desulfobacterium autotrophicum).